Consider the following 652-residue polypeptide: Endoplasmic reticulum chaperone BiP (652 aa).

Residues 1 to 16 (MRHLLLALLLLGGARA) form the signal peptide. ATP contacts are provided by residues 34–37 (GTTY), K94, 225–227 (GGT), 291–298 (EKAKRALS), and 362–365 (GSTR). The segment at 123–278 (KPHIQVDVGG…KKKTGKDVRK (156 aa)) is nucleotide-binding (NBD). An interdomain linker region spans residues 407–417 (QDTGDLVLLDV). The substrate-binding (SBD) stretch occupies residues 418–498 (CPLTLGIETV…PRGVPQIEVT (81 aa)). Positions 630 to 652 (SKLYGSAGPPPTGEEEAAEKDEL) are disordered. Acidic residues predominate over residues 642 to 652 (GEEEAAEKDEL). Positions 649–652 (KDEL) match the Prevents secretion from ER motif.

The protein belongs to the heat shock protein 70 family. In terms of assembly, monomer and homooligomer; homooligomerization via the interdomain linker inactivates the chaperone activity and acts as a storage of HSPA5/BiP molecules. Interacts with DNAJC10. Interacts with DNAJB9/ERdj4; leading to recruit HSPA5/BiP to ERN1/IRE1. Interacts with ERN1/IRE1; interaction takes place following interaction with DNAJB9/ERdj4 and leads to inactivate ERN1/IRE1.

The protein localises to the endoplasmic reticulum lumen. The protein resides in the melanosome. It is found in the cytoplasm. Its subcellular location is the cell surface. The enzyme catalyses ATP + H2O = ADP + phosphate + H(+). With respect to regulation, the chaperone activity is regulated by ATP-induced allosteric coupling of the nucleotide-binding (NBD) and substrate-binding (SBD) domains. In the ADP-bound and nucleotide-free (apo) states, the two domains have little interaction. In contrast, in the ATP-bound state the two domains are tightly coupled, which results in drastically accelerated kinetics in both binding and release of polypeptide substrates. J domain-containing co-chaperones (DNAJB9/ERdj4 or DNAJC10/ERdj5) stimulate the ATPase activity and are required for efficient substrate recognition by HSPA5/BiP. Homooligomerization inactivates participating HSPA5/BiP protomers and probably act as reservoirs to store HSPA5/BiP molecules when they are not needed by the cell. Its function is as follows. Endoplasmic reticulum chaperone that plays a key role in protein folding and quality control in the endoplasmic reticulum lumen. Involved in the correct folding of proteins and degradation of misfolded proteins via its interaction with DNAJC10/ERdj5, probably to facilitate the release of DNAJC10/ERdj5 from its substrate. Acts as a key repressor of the EIF2AK3/PERK and ERN1/IRE1-mediated unfolded protein response (UPR). In the unstressed endoplasmic reticulum, recruited by DNAJB9/ERdj4 to the luminal region of ERN1/IRE1, leading to disrupt the dimerization of ERN1/IRE1, thereby inactivating ERN1/IRE1. Also binds and inactivates EIF2AK3/PERK in unstressed cells. Accumulation of misfolded protein in the endoplasmic reticulum causes release of HSPA5/BiP from ERN1/IRE1 and EIF2AK3/PERK, allowing their homodimerization and subsequent activation. May also play a role in apoptosis and cell proliferation. This is Endoplasmic reticulum chaperone BiP from Gallus gallus (Chicken).